Here is a 162-residue protein sequence, read N- to C-terminus: Selenoprotein F (162 aa).

Positions 1-28 (MAAGQGGWLRPALGLRLLLATAFQAVSA) are cleaved as a signal peptide. Residue U93 is a non-standard amino acid, selenocysteine.

It belongs to the selenoprotein M/F family. In terms of assembly, forms a tight complex with UGGT1/UGCGL1. Interacts with UGGT2/UGCGL2. Interacts with RDH11. In terms of tissue distribution, highest levels in prostate, lower levels in brain, lung, thyroid gland, and large intestine.

Its subcellular location is the endoplasmic reticulum lumen. In terms of biological role, may be involved in redox reactions associated with the formation of disulfide bonds. May contribute to the quality control of protein folding in the endoplasmic reticulum. May regulate protein folding by enhancing the catalytic activity of UGGT1/UGCGL1 and UGGT2/UGCGL2. The polypeptide is Selenoprotein F (Rattus norvegicus (Rat)).